Here is a 328-residue protein sequence, read N- to C-terminus: P2Y purinoceptor 6 (328 aa).

Topologically, residues 1–27 (MERDNGTIQAPGLPPTTCVYREDFKRL) are extracellular. Residue Asn5 is glycosylated (N-linked (GlcNAc...) asparagine). A helical transmembrane segment spans residues 28 to 48 (LLPPVYSVVLVVGLPLNVCVI). At 49–62 (AQICASRRTLTRSA) the chain is on the cytoplasmic side. A helical membrane pass occupies residues 63–83 (VYTLNLALADLLYACSLPLLI). Over 84–101 (YNYARGDHWPFGDLACRL) the chain is Extracellular. Cys99 and Cys177 form a disulfide bridge. The chain crosses the membrane as a helical span at residues 102-122 (VRFLFYANLHGSILFLTCISF). Residues 123-144 (QRYLGICHPLAPWHKRGGRRAA) lie on the Cytoplasmic side of the membrane. The chain crosses the membrane as a helical span at residues 145–165 (WVVCGVVWLVVTAQCLPTAVF). At 166–194 (AATGIQRNRTVCYDLSPPILSTRYLPYGM) the chain is on the extracellular side. Residue Asn173 is glycosylated (N-linked (GlcNAc...) asparagine). A helical membrane pass occupies residues 195–215 (ALTVIGFLLPFTALLACYCRM). Over 216–236 (ARRLCRQDGPAGPVAQERRSK) the chain is Cytoplasmic. A helical transmembrane segment spans residues 237-257 (AARMAVVVAAVFVISFLPFHI). Residues 258–280 (TKTAYLAVRSTPGVSCPVLETFA) lie on the Extracellular side of the membrane. The helical transmembrane segment at 281-303 (AAYKGTRPFASANSVLDPILFYF) threads the bilayer. The Cytoplasmic segment spans residues 304 to 328 (TQQKFRRQPHDLLQKLTAKWQRQRV).

It belongs to the G-protein coupled receptor 1 family. As to expression, abundantly expressed in various tissues including lung, stomach, intestine, spleen, mesentery, heart, and, most prominently, aorta.

The protein localises to the cell membrane. Its function is as follows. Receptor for extracellular UTP &gt; ADP = 2-methylthio-ATP &gt; ADP-beta-S &gt; ATP = ATP-gamma-S. The activity of this receptor is mediated by G proteins which activate a phosphatidylinositol-calcium second messenger system. Functionally coupled to phospholipase C. In Rattus norvegicus (Rat), this protein is P2Y purinoceptor 6 (P2ry6).